A 71-amino-acid polypeptide reads, in one-letter code: Large ribosomal subunit protein bL31 (71 aa).

Positions 16, 18, 37, and 40 each coordinate Zn(2+).

Belongs to the bacterial ribosomal protein bL31 family. Type A subfamily. In terms of assembly, part of the 50S ribosomal subunit. It depends on Zn(2+) as a cofactor.

Functionally, binds the 23S rRNA. The protein is Large ribosomal subunit protein bL31 of Actinobacillus succinogenes (strain ATCC 55618 / DSM 22257 / CCUG 43843 / 130Z).